The sequence spans 1342 residues: DNA-directed RNA polymerase subunit beta (1342 aa).

It belongs to the RNA polymerase beta chain family. In terms of assembly, the RNAP catalytic core consists of 2 alpha, 1 beta, 1 beta' and 1 omega subunit. When a sigma factor is associated with the core the holoenzyme is formed, which can initiate transcription.

The enzyme catalyses RNA(n) + a ribonucleoside 5'-triphosphate = RNA(n+1) + diphosphate. Functionally, DNA-dependent RNA polymerase catalyzes the transcription of DNA into RNA using the four ribonucleoside triphosphates as substrates. This is DNA-directed RNA polymerase subunit beta from Erwinia tasmaniensis (strain DSM 17950 / CFBP 7177 / CIP 109463 / NCPPB 4357 / Et1/99).